A 174-amino-acid polypeptide reads, in one-letter code: B3 domain-containing protein At3g06220 (174 aa).

The TF-B3 DNA-binding region spans 8–101; it reads PRFYTVFLSC…SYEVSIYGRG (94 aa). The disordered stretch occupies residues 114–174; that stretch reads EISDESESDN…ISDASDSDYY (61 aa). Acidic residues-rich tracts occupy residues 139 to 150 and 164 to 174; these read ENSDDTEGDNDS and EISDASDSDYY.

Its subcellular location is the nucleus. The chain is B3 domain-containing protein At3g06220 from Arabidopsis thaliana (Mouse-ear cress).